The chain runs to 331 residues: MGSAGLSRLHGLFAVYKPPGLKWKHLRDTVELQLLKGLNARKPPAPKQRVRFLLGPMEGSEEKELTLTATSVPSFINHPLVCGPAFAHLKVGVGHRLDAQASGVLVLGVGHGCRLLTDMYNAHLTKDYTVRGLLGKATDDFREDGRLVEKTTYDHVTREKLDRILAVIQGSHQKALVMYSNLDLKTQEAYEMAVRGLIRPMNKSPMLITGIRCLYFAPPEFLLEVQCMHETQKELRKLVHEIGLELKTTAVCTQVRRTRDGFFTLDSALLRTQWDLTNIQDAIRAATPQVAAELEKSLSPGLDTKQLPSPGWSWDSQGPSSTLGLERGAGQ.

Residues 1–10 (MGSAGLSRLH) constitute a mitochondrion transit peptide. Residue D98 is the Nucleophile of the active site. The tract at residues 296–331 (KSLSPGLDTKQLPSPGWSWDSQGPSSTLGLERGAGQ) is disordered. The segment covering 314–323 (WDSQGPSSTL) has biased composition (polar residues).

This sequence belongs to the pseudouridine synthase TruB family. Forms a regulatory protein-RNA complex, consisting of RCC1L, NGRN, RPUSD3, RPUSD4, TRUB2, FASTKD2 and 16S mt-rRNA.

The protein localises to the mitochondrion matrix. It catalyses the reaction a uridine in mRNA = a pseudouridine in mRNA. The enzyme catalyses uridine(55) in tRNA = pseudouridine(55) in tRNA. In terms of biological role, minor enzyme contributing to the isomerization of uridine to pseudouridine (pseudouridylation) of specific mitochondrial mRNAs (mt-mRNAs) such as COXI and COXIII mt-mRNAs. As a component of a functional protein-RNA module, consisting of RCC1L, NGRN, RPUSD3, RPUSD4, TRUB2, FASTKD2 and 16S mitochondrial ribosomal RNA (16S mt-rRNA), controls 16S mt-rRNA abundance and is required for intra-mitochondrial translation. Also catalyzes pseudouridylation of some tRNAs, including synthesis of pseudouridine(55) from uracil-55, in the psi GC loop of a subset of tRNAs. The sequence is that of Pseudouridylate synthase TRUB2, mitochondrial from Homo sapiens (Human).